A 627-amino-acid chain; its full sequence is 5-aminolevulinate synthase, non-specific, mitochondrial (627 aa).

Residues 1-58 (MDVIVRRCPFLARVPQAFFQQSKKSLAVYAQRCPFMMELASKPMAPSLARALCSSSSS) constitute a mitochondrion transit peptide. The substrate site is built by arginine 204, serine 321, and lysine 340. The pyridoxal 5'-phosphate site is built by serine 373, histidine 401, and threonine 429. Lysine 432 is an active-site residue. The residue at position 432 (lysine 432) is an N6-(pyridoxal phosphate)lysine. Positions 461 and 462 each coordinate pyridoxal 5'-phosphate. Substrate is bound at residue threonine 549.

It belongs to the class-II pyridoxal-phosphate-dependent aminotransferase family. In terms of assembly, homodimer. Requires pyridoxal 5'-phosphate as cofactor.

It is found in the mitochondrion inner membrane. It carries out the reaction succinyl-CoA + glycine + H(+) = 5-aminolevulinate + CO2 + CoA. It functions in the pathway porphyrin-containing compound metabolism; protoporphyrin-IX biosynthesis; 5-aminolevulinate from glycine: step 1/1. Catalyzes the pyridoxal 5'-phosphate (PLP)-dependent condensation of succinyl-CoA and glycine to form aminolevulinic acid (ALA), with CoA and CO2 as by-products. The chain is 5-aminolevulinate synthase, non-specific, mitochondrial (alas1) from Opsanus tau (Oyster toadfish).